Here is a 181-residue protein sequence, read N- to C-terminus: MLKGKTIYVRPLEVTDAEENLGLQSENRDFFEQFSMIRADDYYTVEGQRKRITEYQERLEKDEEYHFGIFTASDDRLIGTVSLFQIIRGALQTAFIGYFLDKAHNGKGIMTEAVRLVVDYAFHELKLHRIEAGVMPRNLGSMRVLEKAGFHKEGIARKNVKINGVWEDHQVLAILNPDDEQ.

The N-acetyltransferase domain occupies 7-172 (IYVRPLEVTD…NGVWEDHQVL (166 aa)).

The protein belongs to the acetyltransferase family. RimJ subfamily.

The catalysed reaction is an N-terminal L-alpha-aminoacyl-[protein] + acetyl-CoA = N-terminal N(alpha)-acetyl-L-alpha-aminoacyl-[protein] + CoA + H(+). In terms of biological role, probable N-terminal protein acetyltransferase. The chain is Probable N-acetyltransferase YjcK (yjcK) from Bacillus subtilis (strain 168).